The sequence spans 306 residues: Bifunctional protein FolD (306 aa).

NADP(+)-binding positions include 169–171 (GRS), Ser194, and Ile235.

The protein belongs to the tetrahydrofolate dehydrogenase/cyclohydrolase family. As to quaternary structure, homodimer.

It catalyses the reaction (6R)-5,10-methylene-5,6,7,8-tetrahydrofolate + NADP(+) = (6R)-5,10-methenyltetrahydrofolate + NADPH. The catalysed reaction is (6R)-5,10-methenyltetrahydrofolate + H2O = (6R)-10-formyltetrahydrofolate + H(+). The protein operates within one-carbon metabolism; tetrahydrofolate interconversion. Its function is as follows. Catalyzes the oxidation of 5,10-methylenetetrahydrofolate to 5,10-methenyltetrahydrofolate and then the hydrolysis of 5,10-methenyltetrahydrofolate to 10-formyltetrahydrofolate. The polypeptide is Bifunctional protein FolD (Thermosynechococcus vestitus (strain NIES-2133 / IAM M-273 / BP-1)).